The primary structure comprises 125 residues: Small ribosomal subunit protein uS12 (125 aa).

A disordered region spans residues 1–30 (MPTISQLVRKPRAAKPLKSKVPALGNSPQK). Residues 9-18 (RKPRAAKPLK) show a composition bias toward basic residues. Asp-89 is modified (3-methylthioaspartic acid). The interval 103-125 (DTAGVKDRKQGRSKYGAKKPKSA) is disordered. Basic residues predominate over residues 113–125 (GRSKYGAKKPKSA).

Belongs to the universal ribosomal protein uS12 family. In terms of assembly, part of the 30S ribosomal subunit. Contacts proteins S8 and S17. May interact with IF1 in the 30S initiation complex.

With S4 and S5 plays an important role in translational accuracy. Functionally, interacts with and stabilizes bases of the 16S rRNA that are involved in tRNA selection in the A site and with the mRNA backbone. Located at the interface of the 30S and 50S subunits, it traverses the body of the 30S subunit contacting proteins on the other side and probably holding the rRNA structure together. The combined cluster of proteins S8, S12 and S17 appears to hold together the shoulder and platform of the 30S subunit. This is Small ribosomal subunit protein uS12 from Nitrosospira multiformis (strain ATCC 25196 / NCIMB 11849 / C 71).